The following is a 418-amino-acid chain: Acetylornithine aminotransferase (418 aa).

Residues 116 to 117 and F149 each bind pyridoxal 5'-phosphate; that span reads GA. R152 contributes to the N(2)-acetyl-L-ornithine binding site. A pyridoxal 5'-phosphate-binding site is contributed by 240-243; the sequence is DEVQ. An N6-(pyridoxal phosphate)lysine modification is found at K269. Residue S296 participates in N(2)-acetyl-L-ornithine binding. T297 is a pyridoxal 5'-phosphate binding site.

It belongs to the class-III pyridoxal-phosphate-dependent aminotransferase family. ArgD subfamily. As to quaternary structure, homodimer. It depends on pyridoxal 5'-phosphate as a cofactor.

It is found in the cytoplasm. The catalysed reaction is N(2)-acetyl-L-ornithine + 2-oxoglutarate = N-acetyl-L-glutamate 5-semialdehyde + L-glutamate. It functions in the pathway amino-acid biosynthesis; L-arginine biosynthesis; N(2)-acetyl-L-ornithine from L-glutamate: step 4/4. The sequence is that of Acetylornithine aminotransferase from Prochlorococcus marinus (strain MIT 9313).